We begin with the raw amino-acid sequence, 411 residues long: Bifunctional protein GlmU (411 aa).

The tract at residues 1–204 (MDAIILCAGK…NGKLHGIELN (204 aa)) is pyrophosphorylase. UTP contacts are provided by residues 6–9 (LCAG), glutamine 74, and glycine 79. N-acetyl-alpha-D-glucosamine 1-phosphate is bound by residues threonine 80, glycine 130, asparagine 142, and asparagine 158. The tract at residues 205–224 (GYWNDIGHPWDVLSANNRFL) is linker. The tract at residues 225 to 411 (NKIISKVSGK…DELVITKKRN (187 aa)) is N-acetyltransferase. The active-site Proton acceptor is the histidine 308. Positions 384 and 401 each coordinate acetyl-CoA.

In the N-terminal section; belongs to the N-acetylglucosamine-1-phosphate uridyltransferase family. This sequence in the C-terminal section; belongs to the transferase hexapeptide repeat family.

The enzyme catalyses N-acetyl-alpha-D-glucosamine 1-phosphate + UTP + H(+) = UDP-N-acetyl-alpha-D-glucosamine + diphosphate. It carries out the reaction alpha-D-glucosamine 1-phosphate + acetyl-CoA = N-acetyl-alpha-D-glucosamine 1-phosphate + CoA + H(+). The protein operates within nucleotide-sugar biosynthesis; UDP-N-acetyl-alpha-D-glucosamine biosynthesis; N-acetyl-alpha-D-glucosamine 1-phosphate from alpha-D-glucosamine 6-phosphate (route II): step 2/2. Its pathway is nucleotide-sugar biosynthesis; UDP-N-acetyl-alpha-D-glucosamine biosynthesis; UDP-N-acetyl-alpha-D-glucosamine from N-acetyl-alpha-D-glucosamine 1-phosphate: step 1/1. In terms of biological role, catalyzes the last two sequential reactions in the de novo biosynthetic pathway for UDP-N-acetyl-glucosamine (UDP-GlcNAc). Responsible for the acetylation of GlcN-1-P to GlcNAc-1-P, and for the uridyl transfer from UTP to GlcNAc-1-P, to produce UDP-GlcNAc and pyrophosphate. The protein is Bifunctional protein GlmU of Methanococcus maripaludis (strain C7 / ATCC BAA-1331).